A 2295-amino-acid polypeptide reads, in one-letter code: Protein DOP1B (2295 aa).

Phosphoserine is present on residues S556 and S597. Disordered regions lie at residues 574–599, 651–684, 1034–1059, and 1092–1136; these read AGDEEPSFPPLKSEDSGIGLSASSPE, GEENKPEEPPGKGNKGQTQSTEHPGRKSSWDPKP, CKEACGESEPQEGAPEERLPRGQFTT, and DLPD…LQDL. Residues 1111–1131 are compositionally biased toward polar residues; that stretch reads ADTSSGHTDSENTSTFSSPSH. S1167 carries the phosphoserine modification.

The protein belongs to the DOP1 family. In terms of assembly, homooligomer. Heterotrimer with ATP9A and MON2; this interaction is retromer-independent. Interacts with SNX3. In terms of tissue distribution, expressed in liver, heart and brain.

The protein localises to the early endosome membrane. It is found in the golgi apparatus membrane. In terms of biological role, may play a role in regulating membrane trafficking of cargo proteins. Together with ATP9A and MON2, regulates SNX3 retromer-mediated endosomal sorting of WLS away from lysosomal degradation. The protein is Protein DOP1B (Dop1b) of Mus musculus (Mouse).